The chain runs to 421 residues: Acetate kinase (421 aa).

Mg(2+) is bound at residue N7. ATP is bound at residue K14. R91 is a substrate binding site. D148 serves as the catalytic Proton donor/acceptor. ATP-binding positions include H208–G212 and D283–R285. A Mg(2+)-binding site is contributed by E387.

The protein belongs to the acetokinase family. In terms of assembly, homodimer. Mg(2+) is required as a cofactor. It depends on Mn(2+) as a cofactor.

The protein localises to the cytoplasm. The enzyme catalyses acetate + ATP = acetyl phosphate + ADP. Its pathway is metabolic intermediate biosynthesis; acetyl-CoA biosynthesis; acetyl-CoA from acetate: step 1/2. In terms of biological role, catalyzes the formation of acetyl phosphate from acetate and ATP. Can also catalyze the reverse reaction. The sequence is that of Acetate kinase from Geobacter sulfurreducens (strain ATCC 51573 / DSM 12127 / PCA).